We begin with the raw amino-acid sequence, 131 residues long: NADPH-dependent 7-cyano-7-deazaguanine reductase (131 aa).

The Thioimide intermediate role is filled by Cys47. Asp54 serves as the catalytic Proton donor. Residues 69 to 71 (MEL) and 88 to 89 (HE) each bind substrate.

This sequence belongs to the GTP cyclohydrolase I family. QueF type 1 subfamily.

The protein localises to the cytoplasm. It carries out the reaction 7-aminomethyl-7-carbaguanine + 2 NADP(+) = 7-cyano-7-deazaguanine + 2 NADPH + 3 H(+). The protein operates within tRNA modification; tRNA-queuosine biosynthesis. Functionally, catalyzes the NADPH-dependent reduction of 7-cyano-7-deazaguanine (preQ0) to 7-aminomethyl-7-deazaguanine (preQ1). This Microcystis aeruginosa (strain NIES-843 / IAM M-2473) protein is NADPH-dependent 7-cyano-7-deazaguanine reductase.